Consider the following 219-residue polypeptide: Ribosome hibernation promotion factor (219 aa).

It belongs to the HPF/YfiA ribosome-associated protein family. Long HPF subfamily. Interacts with 100S ribosomes.

The protein localises to the cytoplasm. Its function is as follows. Required for dimerization of active 70S ribosomes into 100S ribosomes in stationary phase; 100S ribosomes are translationally inactive and sometimes present during exponential growth. The chain is Ribosome hibernation promotion factor from Mycobacterium tuberculosis (strain ATCC 25618 / H37Rv).